A 335-amino-acid chain; its full sequence is DDRGK domain-containing protein 1 (335 aa).

Residues 1–6 (MGDTYS) are Lumenal-facing. The chain crosses the membrane as a helical span at residues 7–27 (LVLVAGYLSIFLFIGAIGYFY). At 28–335 (LSKPRIPSSN…NNDQDPVDTN (308 aa)) the chain is on the cytoplasmic side. A disordered region spans residues 37 to 124 (NVNEQQQQQQ…GEDIGVVAPG (88 aa)). Composition is skewed to low complexity over residues 41–56 (QQQQQQQQQQQQQQPQ) and 91–103 (SSGSDSDNSTNSD). Positions 104-117 (NYDDDNGQEGEGED) are enriched in acidic residues.

This sequence belongs to the DDRGK1 family.

The protein localises to the endoplasmic reticulum membrane. In terms of biological role, substrate adapter for ufmylation, the covalent attachment of the ubiquitin-like modifier UFM1 to substrate proteins. The protein is DDRGK domain-containing protein 1 of Dictyostelium discoideum (Social amoeba).